Consider the following 397-residue polypeptide: Acetate kinase 1 (397 aa).

N8 contributes to the Mg(2+) binding site. ATP is bound at residue K15. R89 is a substrate binding site. The Proton donor/acceptor role is filled by D146. Residues 206-210, 281-283, and 329-333 contribute to the ATP site; these read HLGNG, DLR, and GIGEN. E382 provides a ligand contact to Mg(2+).

It belongs to the acetokinase family. In terms of assembly, homodimer. It depends on Mg(2+) as a cofactor. The cofactor is Mn(2+).

It is found in the cytoplasm. It catalyses the reaction acetate + ATP = acetyl phosphate + ADP. Its pathway is metabolic intermediate biosynthesis; acetyl-CoA biosynthesis; acetyl-CoA from acetate: step 1/2. Catalyzes the formation of acetyl phosphate from acetate and ATP. Can also catalyze the reverse reaction. The protein is Acetate kinase 1 of Listeria monocytogenes serovar 1/2a (strain ATCC BAA-679 / EGD-e).